Reading from the N-terminus, the 374-residue chain is Gibberellin 3-beta-dioxygenase 1 (374 aa).

One can recognise a Fe2OG dioxygenase domain in the interval 206 to 307 (KACAALQLNS…RFSVAYLYGP (102 aa)). Fe cation contacts are provided by H231, D233, and H288. The active site involves R298. Position 298 (R298) interacts with 2-oxoglutarate.

Belongs to the iron/ascorbate-dependent oxidoreductase family. GA3OX subfamily. The cofactor is L-ascorbate. It depends on Fe(2+) as a cofactor. In terms of tissue distribution, expressed in radicles, roots, internodes, cotyledons, leaves and shoots. Barely detected in developing seeds. Not detected in flowers or young fruits.

It catalyses the reaction gibberellin A20 + 2-oxoglutarate + O2 = gibberellin A1 + succinate + CO2. The protein operates within plant hormone biosynthesis; gibberellin biosynthesis. Converts the inactive gibberellin (GA) precursors GA9 and GA20 in the bioactives gibberellins GA4 and GA1. Has a small activity on GA29, producing GA8. Unable to convert GA20 to GA5, GA5 to GA3 or GA12 to GA14. Involved in the production of bioactive GA for vegetative growth and development, but not for the 3-beta-hydroxylation of GA in developing seeds. The protein is Gibberellin 3-beta-dioxygenase 1 (LE) of Pisum sativum (Garden pea).